The sequence spans 73 residues: UPF0235 protein LA_1736 (73 aa).

It belongs to the UPF0235 family.

In Leptospira interrogans serogroup Icterohaemorrhagiae serovar Lai (strain 56601), this protein is UPF0235 protein LA_1736.